A 122-amino-acid polypeptide reads, in one-letter code: Large ribosomal subunit protein uL18 (122 aa).

The interval 1 to 24 (MLKKADKNANRLQRHKRVRRKISG) is disordered. The segment covering 12-22 (LQRHKRVRRKI) has biased composition (basic residues).

It belongs to the universal ribosomal protein uL18 family. In terms of assembly, part of the 50S ribosomal subunit; part of the 5S rRNA/L5/L18/L25 subcomplex. Contacts the 5S and 23S rRNAs.

This is one of the proteins that bind and probably mediate the attachment of the 5S RNA into the large ribosomal subunit, where it forms part of the central protuberance. The sequence is that of Large ribosomal subunit protein uL18 from Clostridioides difficile (strain 630) (Peptoclostridium difficile).